The following is a 207-amino-acid chain: Ribosomal RNA small subunit methyltransferase G (207 aa).

Residues G73, L78, 124 to 125 (VE), and R139 each bind S-adenosyl-L-methionine.

It belongs to the methyltransferase superfamily. RNA methyltransferase RsmG family.

It localises to the cytoplasm. It carries out the reaction guanosine(527) in 16S rRNA + S-adenosyl-L-methionine = N(7)-methylguanosine(527) in 16S rRNA + S-adenosyl-L-homocysteine. Functionally, specifically methylates the N7 position of guanine in position 527 of 16S rRNA. This chain is Ribosomal RNA small subunit methyltransferase G, found in Salmonella schwarzengrund (strain CVM19633).